We begin with the raw amino-acid sequence, 413 residues long: Multifunctional CCA protein (413 aa).

Positions 8 and 11 each coordinate ATP. Residues Gly-8 and Arg-11 each contribute to the CTP site. Asp-21 and Asp-23 together coordinate Mg(2+). Arg-91, Arg-137, and Arg-140 together coordinate ATP. Positions 91, 137, and 140 each coordinate CTP. The HD domain maps to 228 to 329; it reads TGKHTLLSLK…VSLFDKGDFW (102 aa).

The protein belongs to the tRNA nucleotidyltransferase/poly(A) polymerase family. Bacterial CCA-adding enzyme type 1 subfamily. As to quaternary structure, monomer. Can also form homodimers and oligomers. It depends on Mg(2+) as a cofactor. Requires Ni(2+) as cofactor.

The catalysed reaction is a tRNA precursor + 2 CTP + ATP = a tRNA with a 3' CCA end + 3 diphosphate. The enzyme catalyses a tRNA with a 3' CCA end + 2 CTP + ATP = a tRNA with a 3' CCACCA end + 3 diphosphate. Its function is as follows. Catalyzes the addition and repair of the essential 3'-terminal CCA sequence in tRNAs without using a nucleic acid template. Adds these three nucleotides in the order of C, C, and A to the tRNA nucleotide-73, using CTP and ATP as substrates and producing inorganic pyrophosphate. tRNA 3'-terminal CCA addition is required both for tRNA processing and repair. Also involved in tRNA surveillance by mediating tandem CCA addition to generate a CCACCA at the 3' terminus of unstable tRNAs. While stable tRNAs receive only 3'-terminal CCA, unstable tRNAs are marked with CCACCA and rapidly degraded. This Shewanella denitrificans (strain OS217 / ATCC BAA-1090 / DSM 15013) protein is Multifunctional CCA protein.